The primary structure comprises 362 residues: Heme A synthase (362 aa).

5 helical membrane passes run 11 to 31, 102 to 122, 128 to 148, 159 to 179, and 198 to 218; these read AAIR…VLVG, VIGM…AVSG, LWLI…MVAS, VRLA…VWTL, and AWAL…VAGL. His-262 serves as a coordination point for heme. The next 3 helical transmembrane spans lie at 264–286, 297–317, and 318–338; these read MTAY…AGAG, LAAI…VVPI, and SLAL…VLQA. His-323 is a heme binding site.

It belongs to the COX15/CtaA family. Type 2 subfamily. Interacts with CtaB. Heme b is required as a cofactor.

It localises to the cell membrane. The enzyme catalyses Fe(II)-heme o + 2 A + H2O = Fe(II)-heme a + 2 AH2. The protein operates within porphyrin-containing compound metabolism; heme A biosynthesis; heme A from heme O: step 1/1. Catalyzes the conversion of heme O to heme A by two successive hydroxylations of the methyl group at C8. The first hydroxylation forms heme I, the second hydroxylation results in an unstable dihydroxymethyl group, which spontaneously dehydrates, resulting in the formyl group of heme A. This chain is Heme A synthase, found in Bradyrhizobium sp. (strain ORS 278).